The sequence spans 346 residues: E3 ubiquitin-protein ligase ARK2C (346 aa).

Disordered stretches follow at residues 23-76 (PFQR…QHSG) and 267-288 (PHKYKKRRPQDGKGKKDEGEES). The tract at residues 266–268 (FPH) is ubiquitin binding. Basic and acidic residues predominate over residues 275–284 (PQDGKGKKDE). 2 residues coordinate Zn(2+): cysteine 294 and cysteine 297. The segment at 294 to 335 (CTICLSMLEDGEDVRRLPCMHLFHQLCVDQWLAMSKKCPICR) adopts an RING-type; atypical zinc-finger fold. The ubiquitin binding stretch occupies residues 309–313 (RLPCM). 2 residues coordinate Zn(2+): histidine 317 and cysteine 320.

It belongs to the Arkadia family. Monomer; binding to the ubiquitin-conjugating enzyme E2 does not trigger homodimerization.

The protein resides in the nucleus. It catalyses the reaction S-ubiquitinyl-[E2 ubiquitin-conjugating enzyme]-L-cysteine + [acceptor protein]-L-lysine = [E2 ubiquitin-conjugating enzyme]-L-cysteine + N(6)-ubiquitinyl-[acceptor protein]-L-lysine.. With respect to regulation, binds free ubiquitin non-covalently via its RING-type zinc finger. Ubiquitin-binding leads to enhance the E3 ubiquitin-protein ligase activity by stabilizing the ubiquitin-conjugating enzyme E2 (donor ubiquitin) in the 'closed' conformation and activating ubiquitin transfer. In terms of biological role, E3 ubiquitin-protein ligase that acts as a regulator of motor axon elongation. Required for efficient motor axon extension in the dorsal forelimb by enhancing the transcriptional responses of the SMAD1/SMAD5/SMAD8 effectors, which are activated downstream of BMP. Acts by mediating ubiquitination and degradation of SMAD inhibitors such as SMAD6, SMAD7, SKI and SNON isoform of SKIL. This is E3 ubiquitin-protein ligase ARK2C from Homo sapiens (Human).